A 153-amino-acid chain; its full sequence is Succinate dehydrogenase assembly factor 2, mitochondrial (153 aa).

The protein belongs to the SDHAF2 family. Interacts with the flavoprotein subunit within the SDH catalytic dimer.

The protein resides in the mitochondrion matrix. In terms of biological role, plays an essential role in the assembly of succinate dehydrogenase (SDH), an enzyme complex (also referred to as respiratory complex II) that is a component of both the tricarboxylic acid (TCA) cycle and the mitochondrial electron transport chain, and which couples the oxidation of succinate to fumarate with the reduction of ubiquinone (coenzyme Q) to ubiquinol. Required for flavinylation (covalent attachment of FAD) of the flavoprotein subunit of the SDH catalytic dimer. This is Succinate dehydrogenase assembly factor 2, mitochondrial from Candida glabrata (strain ATCC 2001 / BCRC 20586 / JCM 3761 / NBRC 0622 / NRRL Y-65 / CBS 138) (Yeast).